The following is a 304-amino-acid chain: Ornithine carbamoyltransferase (304 aa).

Carbamoyl phosphate-binding positions include 53-56 (STRT), Q80, R104, and 131-134 (HPCQ). Residues N162, D222, and 226 to 227 (SM) contribute to the L-ornithine site. Carbamoyl phosphate contacts are provided by residues 261–262 (CL) and R289.

The protein belongs to the aspartate/ornithine carbamoyltransferase superfamily. OTCase family.

The protein localises to the cytoplasm. The enzyme catalyses carbamoyl phosphate + L-ornithine = L-citrulline + phosphate + H(+). It functions in the pathway amino-acid biosynthesis; L-arginine biosynthesis; L-arginine from L-ornithine and carbamoyl phosphate: step 1/3. Reversibly catalyzes the transfer of the carbamoyl group from carbamoyl phosphate (CP) to the N(epsilon) atom of ornithine (ORN) to produce L-citrulline. The polypeptide is Ornithine carbamoyltransferase (Rhizobium johnstonii (strain DSM 114642 / LMG 32736 / 3841) (Rhizobium leguminosarum bv. viciae)).